A 509-amino-acid polypeptide reads, in one-letter code: Poly(A) RNA polymerase GLD2-A (509 aa).

Residues 88-107 (PGSPSSSFQNRKRRSDEGNV) are disordered. Residues aspartate 240 and aspartate 242 each coordinate Mg(2+). The 54-residue stretch at 409-462 (LGDLLLGFLKYFAVEFDWSKDIISVREGKALPRSDDYLWRNKYICVEEPFDGTN) folds into the PAP-associated domain.

Belongs to the DNA polymerase type-B-like family. GLD2 subfamily. In terms of assembly, component of a complex at least composed of cpeb1, cpsf1, tent2/gld2, pabpc1/ePAB, parn and sympk. Following oocyte maturation, parn is expelled from the complex. Interacts with rbfox2 and sympk. Requires Mg(2+) as cofactor. Mn(2+) is required as a cofactor.

It localises to the cytoplasm. The catalysed reaction is RNA(n) + ATP = RNA(n)-3'-adenine ribonucleotide + diphosphate. Functionally, cytoplasmic poly(A) RNA polymerase that adds successive AMP monomers to the 3'-end of specific RNAs, forming a poly(A) tail. In contrast to the canonical nuclear poly(A) RNA polymerase, it only adds poly(A) to selected cytoplasmic mRNAs during oocyte maturation. Plays a central role during oocyte maturation by mediating polyadenylation of dormant mRNAs, which contain 5'AAUAAA-3' sequence in their 3'UTR. In immature oocytes, polyadenylation of poly(A) tails is counteracted by the ribonuclease parn. During maturation parn is excluded from the ribonucleoprotein complex, allowing poly(A) elongation and activation of mRNAs. May not play a role in replication-dependent histone mRNA degradation. In Xenopus laevis (African clawed frog), this protein is Poly(A) RNA polymerase GLD2-A (tent2-a).